We begin with the raw amino-acid sequence, 256 residues long: Ribonuclease 3 (256 aa).

Residues 6–128 (LATLETRLDH…LFGAVFLDAG (123 aa)) enclose the RNase III domain. Glu-41 provides a ligand contact to Mg(2+). Asp-45 is a catalytic residue. Residues Asp-114 and Glu-117 each coordinate Mg(2+). Glu-117 is a catalytic residue. Residues 155–225 (DAKTLLQEFL…AKVALEAAQA (71 aa)) form the DRBM domain.

Belongs to the ribonuclease III family. As to quaternary structure, homodimer. Mg(2+) is required as a cofactor.

Its subcellular location is the cytoplasm. The catalysed reaction is Endonucleolytic cleavage to 5'-phosphomonoester.. Functionally, digests double-stranded RNA. Involved in the processing of primary rRNA transcript to yield the immediate precursors to the large and small rRNAs (23S and 16S). Processes some mRNAs, and tRNAs when they are encoded in the rRNA operon. Processes pre-crRNA and tracrRNA of type II CRISPR loci if present in the organism. In Bordetella bronchiseptica (strain ATCC BAA-588 / NCTC 13252 / RB50) (Alcaligenes bronchisepticus), this protein is Ribonuclease 3.